A 437-amino-acid chain; its full sequence is Perilipin-2 (437 aa).

A2 carries the post-translational modification N-acetylalanine. S215 carries the post-translational modification Phosphoserine. Y232 carries the post-translational modification Phosphotyrosine. Residues 412-437 (SQNAQDQGAEMDKSSQETQRSEHKTH) are disordered. Over residues 421 to 437 (EMDKSSQETQRSEHKTH) the composition is skewed to basic and acidic residues.

Belongs to the perilipin family. Interacts with IRGC. Acylated; primarily with C14, C16 and C18 fatty acids. In terms of processing, phosphorylation at Tyr-232 by isoform 1 of CHKA (CHKalpha2) promotes dissociation from lipid droplets: dissociation is followed by recruitment of autophagosome machinery to lipid droplets and subsequent lipid droplet lipolysis. Post-translationally, polyubiquitination of Nt-acetylatable A-PLIN2 by MARCHF6 lead to degradation by 26S proteasomes. As to expression, milk lipid globules.

The protein localises to the membrane. The protein resides in the lipid droplet. In terms of biological role, structural component of lipid droplets, which is required for the formation and maintenance of lipid storage droplets. In Homo sapiens (Human), this protein is Perilipin-2.